A 550-amino-acid polypeptide reads, in one-letter code: Glucose-6-phosphate isomerase 3 (550 aa).

The active-site Proton donor is the glutamate 357. Catalysis depends on residues histidine 388 and lysine 514.

It belongs to the GPI family.

Its subcellular location is the cytoplasm. It carries out the reaction alpha-D-glucose 6-phosphate = beta-D-fructose 6-phosphate. Its pathway is carbohydrate biosynthesis; gluconeogenesis. It functions in the pathway carbohydrate degradation; glycolysis; D-glyceraldehyde 3-phosphate and glycerone phosphate from D-glucose: step 2/4. Catalyzes the reversible isomerization of glucose-6-phosphate to fructose-6-phosphate. This Rhodococcus jostii (strain RHA1) protein is Glucose-6-phosphate isomerase 3.